The primary structure comprises 3094 residues: Replicase polyprotein 1ab (3094 aa).

Active-site for leader protease activity residues include Cys-509 and His-569. Residues 622–647 (ARSVEKDLIDFKDEIKSLSKEKRSVT) adopt a coiled-coil conformation. Residues 670-857 (SFTHSVYSDH…HKLSNIKSIM (188 aa)) form the Alphavirus-like MT domain. Residues 1807 to 1816 (DSESVSSDEV) show a composition bias toward low complexity. A disordered region spans residues 1807–1828 (DSESVSSDEVASNPRPGLHGGS). The 173-residue stretch at 2215 to 2387 (TQTNFVSANA…FVDDESRVYG (173 aa)) folds into the (+)RNA virus helicase ATP-binding domain. Residues 2388–2548 (EVSYRCPWDV…AYRVYPTSFG (161 aa)) enclose the (+)RNA virus helicase C-terminal domain. The 114-residue stretch at 2817–2930 (YNVGEIDFSK…FSESPIRNSA (114 aa)) folds into the RdRp catalytic domain.

In terms of processing, the leader protease is released by autoproteolysis.

The protein resides in the host cytoplasmic vesicle membrane. It catalyses the reaction RNA(n) + a ribonucleoside 5'-triphosphate = RNA(n+1) + diphosphate. The enzyme catalyses ATP + H2O = ADP + phosphate + H(+). Functionally, L-pro is involved in systemic transport and in RNA amplification. RNA-dependent RNA polymerase replicates the viral genome. The chain is Replicase polyprotein 1ab from Beet yellows virus (isolate Ukraine) (BYV).